A 468-amino-acid chain; its full sequence is 6-phospho-beta-galactosidase (468 aa).

Residues Gln-19, His-116, Asn-159, Glu-160, and Asn-297 each coordinate D-galactose 6-phosphate. The active-site Proton donor is Glu-160. Residue Glu-375 is the Nucleophile of the active site. Positions 428, 429, 435, and 437 each coordinate D-galactose 6-phosphate.

It belongs to the glycosyl hydrolase 1 family.

It carries out the reaction a 6-phospho-beta-D-galactoside + H2O = D-galactose 6-phosphate + an alcohol. It participates in carbohydrate metabolism; lactose degradation; D-galactose 6-phosphate and beta-D-glucose from lactose 6-phosphate: step 1/1. The sequence is that of 6-phospho-beta-galactosidase from Streptococcus pyogenes serotype M6 (strain ATCC BAA-946 / MGAS10394).